The primary structure comprises 487 residues: Serine/threonine-protein kinase 4 (487 aa).

Methionine 1 is modified (N-acetylmethionine). Threonine 3 bears the Phosphothreonine mark. One can recognise a Protein kinase domain in the interval 30–281 (FDVLEKLGEG…ATQLLQHPFV (252 aa)). Residues 36 to 44 (LGEGSYGSV) and lysine 59 each bind ATP. The Proton acceptor role is filled by aspartate 149. Threonine 183 is modified (phosphothreonine; by autocatalysis). Serine 265 carries the post-translational modification Phosphoserine. Residues 290-310 (LRDLINEAMDVKLKRQEAQQR) adopt a coiled-coil conformation. Positions 305-337 (QEAQQREVDQDDEENSEEDELDSGTMVRAVGDE) are disordered. Acidic residues predominate over residues 313–326 (DQDDEENSEEDELD). Residue serine 320 is modified to Phosphoserine. Phosphothreonine is present on residues threonine 340 and threonine 367. Threonine 387 carries the post-translational modification Phosphothreonine; by PKB/AKT1. Phosphoserine is present on residues serine 410 and serine 414. Phosphotyrosine is present on tyrosine 433. Residues 433–480 (YEFLKSWTVEDLQKRLLALDPMMEQEIEEIRQKYQSKRQPILDAIEAK) form the SARAH domain.

It belongs to the protein kinase superfamily. STE Ser/Thr protein kinase family. STE20 subfamily. In terms of assembly, homodimer; mediated via the coiled-coil region. Interacts with NORE1, which inhibits autoactivation. Interacts with and stabilizes SAV1. Interacts with RASSF1. Interacts with FOXO3. Interacts with RASSF2 (via SARAH domain). Interacts with AR, PKB/AKT1, TNNI3 and SIRT1. Interacts with DLG5 (via PDZ domain 3). Interacts with MARK3 and SCRIB in the presence of DLG5. It depends on Mg(2+) as a cofactor. Autophosphorylated on serine and threonine residues. Phosphorylation at Thr-387 by PKB/AKT1, leads to inhibition of its: kinase activity, nuclear translocation and autophosphorylation at Thr-183. It also diminishes its cleavage by caspases and its ability to phosphorylate FOXO3. In terms of processing, proteolytically cleaved by caspase-3 during apoptosis at Asp-326 and Asp-349 resulting in a 37 kDa or a 39 kDa subunit respectively. The 39 kDa subunit is further cleaved into the 37 kDa form. Proteolytic cleavage results in kinase activation and nuclear translocation of the truncated form (MST1/N). It is less likely that cleavage at Asp-349 is a prerequisite for activation as this site is not conserved in the murine ortholog.

It localises to the cytoplasm. It is found in the nucleus. The catalysed reaction is L-seryl-[protein] + ATP = O-phospho-L-seryl-[protein] + ADP + H(+). The enzyme catalyses L-threonyl-[protein] + ATP = O-phospho-L-threonyl-[protein] + ADP + H(+). Its activity is regulated as follows. Inhibited by the C-terminal non-catalytic region. Activated by caspase-cleavage. Full activation also requires homodimerization and autophosphorylation of Thr-183. Activated by RASSF1 which acts by preventing its dephosphorylation. In terms of biological role, stress-activated, pro-apoptotic kinase which, following caspase-cleavage, enters the nucleus and induces chromatin condensation followed by internucleosomal DNA fragmentation. Key component of the Hippo signaling pathway which plays a pivotal role in organ size control and tumor suppression by restricting proliferation and promoting apoptosis. The core of this pathway is composed of a kinase cascade wherein STK3/MST2 and STK4/MST1, in complex with its regulatory protein SAV1, phosphorylates and activates LATS1/2 in complex with its regulatory protein MOB1, which in turn phosphorylates and inactivates YAP1 oncoprotein and WWTR1/TAZ. Phosphorylation of YAP1 by LATS2 inhibits its translocation into the nucleus to regulate cellular genes important for cell proliferation, cell death, and cell migration. STK3/MST2 and STK4/MST1 are required to repress proliferation of mature hepatocytes, to prevent activation of facultative adult liver stem cells (oval cells), and to inhibit tumor formation. Phosphorylates 'Ser-14' of histone H2B (H2BS14ph) during apoptosis. Phosphorylates FOXO3 upon oxidative stress, which results in its nuclear translocation and cell death initiation. Phosphorylates MOBKL1A, MOBKL1B and RASSF2. Phosphorylates TNNI3 (cardiac Tn-I) and alters its binding affinity to TNNC1 (cardiac Tn-C) and TNNT2 (cardiac Tn-T). Phosphorylates FOXO1 on 'Ser-212' and regulates its activation and stimulates transcription of PMAIP1 in a FOXO1-dependent manner. Phosphorylates SIRT1 and inhibits SIRT1-mediated p53/TP53 deacetylation, thereby promoting p53/TP53 dependent transcription and apoptosis upon DNA damage. Acts as an inhibitor of PKB/AKT1. Phosphorylates AR on 'Ser-650' and suppresses its activity by intersecting with PKB/AKT1 signaling and antagonizing formation of AR-chromatin complexes. The chain is Serine/threonine-protein kinase 4 (STK4) from Otolemur garnettii (Small-eared galago).